A 158-amino-acid chain; its full sequence is Ribosome-binding factor A (158 aa).

The interval 127 to 158 is disordered; that stretch reads RQGAVHAGDADPYKESAAEEPAAYEDDERRPD. Basic and acidic residues predominate over residues 134–143; sequence GDADPYKESA.

This sequence belongs to the RbfA family. In terms of assembly, monomer. Binds 30S ribosomal subunits, but not 50S ribosomal subunits or 70S ribosomes.

Its subcellular location is the cytoplasm. One of several proteins that assist in the late maturation steps of the functional core of the 30S ribosomal subunit. Associates with free 30S ribosomal subunits (but not with 30S subunits that are part of 70S ribosomes or polysomes). Required for efficient processing of 16S rRNA. May interact with the 5'-terminal helix region of 16S rRNA. In Mycobacteroides abscessus (strain ATCC 19977 / DSM 44196 / CCUG 20993 / CIP 104536 / JCM 13569 / NCTC 13031 / TMC 1543 / L948) (Mycobacterium abscessus), this protein is Ribosome-binding factor A.